A 171-amino-acid polypeptide reads, in one-letter code: Cytochrome c oxidase subunit 4 isoform 2, mitochondrial (171 aa).

A mitochondrion-targeting transit peptide spans 1 to 28 (MLPRAAWSLVLRKGGGGRRGMHSSEGTT). Positions 13–32 (KGGGGRRGMHSSEGTTRGGG) are disordered. Over 29–100 (RGGGKMSPYT…TFAEMNRRSN (72 aa)) the chain is Mitochondrial matrix. Residues 101–126 (EWKTVMGCVFFFIGFAALVIWWQRVY) traverse the membrane as a helical segment. The Mitochondrial intermembrane segment spans residues 127–171 (VFPPKPITLTDERKAQQLQRMLDMKVNPVQGLASRWDYEKKQWKK).

This sequence belongs to the cytochrome c oxidase IV family. Component of the cytochrome c oxidase (complex IV, CIV), a multisubunit enzyme composed of 14 subunits. The complex is composed of a catalytic core of 3 subunits MT-CO1, MT-CO2 and MT-CO3, encoded in the mitochondrial DNA, and 11 supernumerary subunits COX4I1 (or COX4I2), COX5A, COX5B, COX6A1 (or COX6A2), COX6B1 (or COX6B2), COX6C, COX7A2 (or COX7A1), COX7B, COX7C, COX8A and NDUFA4, which are encoded in the nuclear genome. The complex exists as a monomer or a dimer and forms supercomplexes (SCs) in the inner mitochondrial membrane with NADH-ubiquinone oxidoreductase (complex I, CI) and ubiquinol-cytochrome c oxidoreductase (cytochrome b-c1 complex, complex III, CIII), resulting in different assemblies (supercomplex SCI(1)III(2)IV(1) and megacomplex MCI(2)III(2)IV(2)). In terms of tissue distribution, highly expressed in lung.

It is found in the mitochondrion inner membrane. It participates in energy metabolism; oxidative phosphorylation. Functionally, component of the cytochrome c oxidase, the last enzyme in the mitochondrial electron transport chain which drives oxidative phosphorylation. The respiratory chain contains 3 multisubunit complexes succinate dehydrogenase (complex II, CII), ubiquinol-cytochrome c oxidoreductase (cytochrome b-c1 complex, complex III, CIII) and cytochrome c oxidase (complex IV, CIV), that cooperate to transfer electrons derived from NADH and succinate to molecular oxygen, creating an electrochemical gradient over the inner membrane that drives transmembrane transport and the ATP synthase. Cytochrome c oxidase is the component of the respiratory chain that catalyzes the reduction of oxygen to water. Electrons originating from reduced cytochrome c in the intermembrane space (IMS) are transferred via the dinuclear copper A center (CU(A)) of subunit 2 and heme A of subunit 1 to the active site in subunit 1, a binuclear center (BNC) formed by heme A3 and copper B (CU(B)). The BNC reduces molecular oxygen to 2 water molecules using 4 electrons from cytochrome c in the IMS and 4 protons from the mitochondrial matrix. The polypeptide is Cytochrome c oxidase subunit 4 isoform 2, mitochondrial (Homo sapiens (Human)).